A 507-amino-acid chain; its full sequence is Probable DNA ligase (507 aa).

Glu209 lines the ATP pocket. The active-site N6-AMP-lysine intermediate is Lys211. ATP-binding residues include Arg216, Arg231, Glu260, Phe300, Arg372, and Lys378.

Belongs to the ATP-dependent DNA ligase family. Mg(2+) serves as cofactor.

The catalysed reaction is ATP + (deoxyribonucleotide)n-3'-hydroxyl + 5'-phospho-(deoxyribonucleotide)m = (deoxyribonucleotide)n+m + AMP + diphosphate.. Functionally, DNA ligase that seals nicks in double-stranded DNA during DNA replication, DNA recombination and DNA repair. This is Probable DNA ligase from Mycobacterium bovis (strain ATCC BAA-935 / AF2122/97).